A 31-amino-acid chain; its full sequence is MLAIVAYIGFLALFTGIAAGLLFGLRSAKIL.

A helical transmembrane segment spans residues 3–23 (AIVAYIGFLALFTGIAAGLLF).

The protein belongs to the PetL family. In terms of assembly, the 4 large subunits of the cytochrome b6-f complex are cytochrome b6, subunit IV (17 kDa polypeptide, PetD), cytochrome f and the Rieske protein, while the 4 small subunits are PetG, PetL, PetM and PetN. The complex functions as a dimer.

Its subcellular location is the cellular thylakoid membrane. Component of the cytochrome b6-f complex, which mediates electron transfer between photosystem II (PSII) and photosystem I (PSI), cyclic electron flow around PSI, and state transitions. PetL is important for photoautotrophic growth as well as for electron transfer efficiency and stability of the cytochrome b6-f complex. This Nostoc sp. (strain PCC 7120 / SAG 25.82 / UTEX 2576) protein is Cytochrome b6-f complex subunit 6.